A 512-amino-acid chain; its full sequence is Histidine ammonia-lyase (512 aa).

A cross-link (5-imidazolinone (Ala-Gly)) is located at residues 142-144; it reads ASG. Serine 143 is subject to 2,3-didehydroalanine (Ser).

It belongs to the PAL/histidase family. Post-translationally, contains an active site 4-methylidene-imidazol-5-one (MIO), which is formed autocatalytically by cyclization and dehydration of residues Ala-Ser-Gly.

Its subcellular location is the cytoplasm. It catalyses the reaction L-histidine = trans-urocanate + NH4(+). The protein operates within amino-acid degradation; L-histidine degradation into L-glutamate; N-formimidoyl-L-glutamate from L-histidine: step 1/3. This chain is Histidine ammonia-lyase, found in Bartonella henselae (strain ATCC 49882 / DSM 28221 / CCUG 30454 / Houston 1) (Rochalimaea henselae).